A 430-amino-acid chain; its full sequence is Methylenetetrahydrofolate--tRNA-(uracil-5-)-methyltransferase TrmFO (430 aa).

9–14 (GAGLAG) is a binding site for FAD.

This sequence belongs to the MnmG family. TrmFO subfamily. FAD is required as a cofactor.

It localises to the cytoplasm. The catalysed reaction is uridine(54) in tRNA + (6R)-5,10-methylene-5,6,7,8-tetrahydrofolate + NADH + H(+) = 5-methyluridine(54) in tRNA + (6S)-5,6,7,8-tetrahydrofolate + NAD(+). The enzyme catalyses uridine(54) in tRNA + (6R)-5,10-methylene-5,6,7,8-tetrahydrofolate + NADPH + H(+) = 5-methyluridine(54) in tRNA + (6S)-5,6,7,8-tetrahydrofolate + NADP(+). In terms of biological role, catalyzes the folate-dependent formation of 5-methyl-uridine at position 54 (M-5-U54) in all tRNAs. The sequence is that of Methylenetetrahydrofolate--tRNA-(uracil-5-)-methyltransferase TrmFO from Fervidobacterium nodosum (strain ATCC 35602 / DSM 5306 / Rt17-B1).